A 741-amino-acid chain; its full sequence is Nuclear poly(A) polymerase 4 (741 aa).

ATP contacts are provided by residues 101–103 (FGS), 113–116 (ADID), 114–116 (DID), Asp-169, Lys-230, Tyr-239, and 248–249 (GV). Asp-114, Asp-116, and Asp-169 together coordinate Mg(2+). Positions 485–492 (RRRQLPPF) match the Nuclear localization signal motif. 2 disordered regions span residues 494-556 (FPNG…LSPQ) and 683-741 (YEGF…RLLT). Residues 534-551 (KNDSEMMDVRPEKPEKRA) show a composition bias toward basic and acidic residues. A compositionally biased stretch (polar residues) spans 701 to 717 (LYSQSGMSEDLQSNSLV). Positions 721-731 (EKSEDRARSES) are enriched in basic and acidic residues. Polar residues predominate over residues 732–741 (FQKSQIRLLT).

Belongs to the poly(A) polymerase family. Monomer. Forms a complex with cleavage and polyadenylation specificity factor (CPSF) subunits CFIS2, FIPS3, PAPS1, PABN1, PABN2, PABN3 and FIPS5. Mg(2+) is required as a cofactor. It depends on Mn(2+) as a cofactor. As to expression, mostly expressed in flowers (very active in pollen, sepals, styles, and stigmas), cotyledons and hypocotyls, and, to a lower extent, in roots (confined to the vascular tissue in the radicle) and leaves (in the vascular tissue and leaf petioles). Barely detected in stems. Active in the primary and secondary root systems.

The protein resides in the nucleus. It catalyses the reaction RNA(n) + ATP = RNA(n)-3'-adenine ribonucleotide + diphosphate. In terms of biological role, essential protein. Polymerase that creates the 3'-poly(A) tail of mRNA's. Also required for the endoribonucleolytic cleavage reaction at some polyadenylation sites. May acquire specificity through interaction with a cleavage and polyadenylation specificity factor (CPSF) at its C-terminus. This is Nuclear poly(A) polymerase 4 from Arabidopsis thaliana (Mouse-ear cress).